Consider the following 346-residue polypeptide: Formimidoylglutamase (346 aa).

Positions 145, 180, 182, 184, 271, and 273 each coordinate Mn(2+).

Belongs to the arginase family. Mn(2+) is required as a cofactor.

The catalysed reaction is N-formimidoyl-L-glutamate + H2O = formamide + L-glutamate. It participates in amino-acid degradation; L-histidine degradation into L-glutamate; L-glutamate from N-formimidoyl-L-glutamate (hydrolase route): step 1/1. Its function is as follows. Catalyzes the conversion of N-formimidoyl-L-glutamate to L-glutamate and formamide. This chain is Formimidoylglutamase, found in Psychrobacter cryohalolentis (strain ATCC BAA-1226 / DSM 17306 / VKM B-2378 / K5).